The chain runs to 155 residues: Endoribonuclease YbeY (155 aa).

Residues His116, His120, and His126 each coordinate Zn(2+).

This sequence belongs to the endoribonuclease YbeY family. It depends on Zn(2+) as a cofactor.

The protein resides in the cytoplasm. Its function is as follows. Single strand-specific metallo-endoribonuclease involved in late-stage 70S ribosome quality control and in maturation of the 3' terminus of the 16S rRNA. The protein is Endoribonuclease YbeY of Thermobifida fusca (strain YX).